The primary structure comprises 430 residues: Histidine--tRNA ligase (430 aa).

Belongs to the class-II aminoacyl-tRNA synthetase family. As to quaternary structure, homodimer.

It is found in the cytoplasm. It catalyses the reaction tRNA(His) + L-histidine + ATP = L-histidyl-tRNA(His) + AMP + diphosphate + H(+). This is Histidine--tRNA ligase from Chlorobaculum parvum (strain DSM 263 / NCIMB 8327) (Chlorobium vibrioforme subsp. thiosulfatophilum).